We begin with the raw amino-acid sequence, 734 residues long: Photosystem I P700 chlorophyll a apoprotein A2 (734 aa).

8 consecutive transmembrane segments (helical) span residues 46–69, 135–158, 175–199, 273–291, 330–353, 369–395, 417–439, and 517–535; these read IFAS…FHVA, LYTG…LHLQ, LNHH…HVAI, IAHH…GHMY, IHFQ…QHMY, AALY…IFFI, AIIS…LYVH, and FLVH…LILV. [4Fe-4S] cluster is bound by residues cysteine 559 and cysteine 568. 2 helical membrane passes run 575-596 and 643-665; these read AFYL…YWHW and LSVW…MFLI. Positions 654, 662, and 670 each coordinate chlorophyll a. Residue tryptophan 671 coordinates phylloquinone. The helical transmembrane segment at 707 to 727 threads the bilayer; the sequence is LVGLAHFSVGYIFTYAAFLIA.

It belongs to the PsaA/PsaB family. The PsaA/B heterodimer binds the P700 chlorophyll special pair and subsequent electron acceptors. PSI consists of a core antenna complex that captures photons, and an electron transfer chain that converts photonic excitation into a charge separation. The eukaryotic PSI reaction center is composed of at least 11 subunits. P700 is a chlorophyll a/chlorophyll a' dimer, A0 is one or more chlorophyll a, A1 is one or both phylloquinones and FX is a shared 4Fe-4S iron-sulfur center. serves as cofactor.

It is found in the plastid. The protein localises to the chloroplast thylakoid membrane. It carries out the reaction reduced [plastocyanin] + hnu + oxidized [2Fe-2S]-[ferredoxin] = oxidized [plastocyanin] + reduced [2Fe-2S]-[ferredoxin]. In terms of biological role, psaA and PsaB bind P700, the primary electron donor of photosystem I (PSI), as well as the electron acceptors A0, A1 and FX. PSI is a plastocyanin-ferredoxin oxidoreductase, converting photonic excitation into a charge separation, which transfers an electron from the donor P700 chlorophyll pair to the spectroscopically characterized acceptors A0, A1, FX, FA and FB in turn. Oxidized P700 is reduced on the lumenal side of the thylakoid membrane by plastocyanin. This Pelargonium hortorum (Common geranium) protein is Photosystem I P700 chlorophyll a apoprotein A2.